A 241-amino-acid polypeptide reads, in one-letter code: Thiamine import ATP-binding protein ThiQ (241 aa).

Residues 2–239 (IQLDKLNHCY…PKDEVLIQYL (238 aa)) enclose the ABC transporter domain. 41 to 48 (GPSGAGKS) lines the ATP pocket.

It belongs to the ABC transporter superfamily. Thiamine importer (TC 3.A.1.19.1) family. The complex is composed of two ATP-binding proteins (ThiQ), two transmembrane proteins (ThiP) and a solute-binding protein (ThiB).

Its subcellular location is the cell inner membrane. It catalyses the reaction thiamine(out) + ATP + H2O = thiamine(in) + ADP + phosphate + H(+). Part of the ABC transporter complex ThiBPQ involved in thiamine import. Responsible for energy coupling to the transport system. This is Thiamine import ATP-binding protein ThiQ from Photobacterium profundum (strain SS9).